Consider the following 223-residue polypeptide: Small ribosomal subunit protein uS3 (223 aa).

A KH type-2 domain is found at 39–107 (VREFLKQKLK…PVQVSVEEIR (69 aa)).

It belongs to the universal ribosomal protein uS3 family. As to quaternary structure, part of the 30S ribosomal subunit. Forms a tight complex with proteins S10 and S14.

Functionally, binds the lower part of the 30S subunit head. Binds mRNA in the 70S ribosome, positioning it for translation. This Methylococcus capsulatus (strain ATCC 33009 / NCIMB 11132 / Bath) protein is Small ribosomal subunit protein uS3.